Consider the following 336-residue polypeptide: MKDRYILAFETSCDETSVAVLKNDDELLSNVIASQIESHKRFGGVVPEVASRHHVEVITACIEEALAEAGITEEDVTAVAVTYGPGLVGALLVGLSAAKAFAWAHGLPLIPVNHMAGHLMAAQSVEPLEFPLLALLVSGGHTELVYVSEAGDYKIVGETRDDAVGEAYDKVGRVMGLTYPAGREIDELVHQGQDIYDFPRAMIKEDNLEFSFSGLKSAFINLHHNAEQKGESLSTEDLCASFQAAVMDILMAKTKKALEKYPVKTLVVAGGVAANKGLRERLAAEITDVKVIIPPLRLCGDNAGMIAYASVSEWNKENFAGWDLNAKPSLAFDTME.

2 residues coordinate Fe cation: His-114 and His-118. Residues Leu-136–Gly-140, Asp-169, Gly-182, Asp-186, and Asn-275 each bind substrate. Asp-301 is a binding site for Fe cation.

The protein belongs to the KAE1 / TsaD family. Fe(2+) is required as a cofactor.

It is found in the cytoplasm. It carries out the reaction L-threonylcarbamoyladenylate + adenosine(37) in tRNA = N(6)-L-threonylcarbamoyladenosine(37) in tRNA + AMP + H(+). In terms of biological role, required for the formation of a threonylcarbamoyl group on adenosine at position 37 (t(6)A37) in tRNAs that read codons beginning with adenine. Is involved in the transfer of the threonylcarbamoyl moiety of threonylcarbamoyl-AMP (TC-AMP) to the N6 group of A37, together with TsaE and TsaB. TsaD likely plays a direct catalytic role in this reaction. The polypeptide is tRNA N6-adenosine threonylcarbamoyltransferase (Streptococcus pneumoniae serotype 19F (strain G54)).